The sequence spans 247 residues: E3 ubiquitin-protein ligase RNF182 (247 aa).

The segment at 20–68 (CKICYNRYNLKQRKPKVLECCHRVCAKCLYKIIDFGDSPQGVIVCPFCR) adopts an RING-type zinc-finger fold. Helical transmembrane passes span 184 to 204 (VLVW…IYLL) and 211 to 231 (LGVV…VYGF).

Interacts with ATP6V0C.

The protein localises to the membrane. Its subcellular location is the cytoplasm. The catalysed reaction is S-ubiquitinyl-[E2 ubiquitin-conjugating enzyme]-L-cysteine + [acceptor protein]-L-lysine = [E2 ubiquitin-conjugating enzyme]-L-cysteine + N(6)-ubiquitinyl-[acceptor protein]-L-lysine.. It functions in the pathway protein modification; protein ubiquitination. In terms of biological role, E3 ubiquitin-protein ligase that mediates the ubiquitination of ATP6V0C and targets it to degradation via the ubiquitin-proteasome pathway. Also plays a role in the inhibition of TLR-triggered innate immune response by mediating 'Lys'-48-linked ubiquitination and subsequent degradation of NF-kappa-B component RELA. This Ailuropoda melanoleuca (Giant panda) protein is E3 ubiquitin-protein ligase RNF182 (RNF182).